A 249-amino-acid chain; its full sequence is Sodium channel modifier 1 (249 aa).

Residues 4–20 (KREGDDQSQLNILKKRR) carry the Bipartite nuclear localization signal motif. The segment at 42–74 (YSCLVCSHRPVFDTVDMLVVHRKGKRHLEGMKW) adopts a Matrin-type zinc-finger fold. Positions 94 to 103 (YVKAEDDRQE) are enriched in basic and acidic residues. 3 disordered regions span residues 94-116 (YVKAEDDRQEPSSSAPLLTQTRK), 128-199 (YSSC…PLTE), and 228-249 (ENVEFDSDEEEPTLLPPCSESS). Residues 104 to 115 (PSSSAPLLTQTR) are compositionally biased toward polar residues. Over residues 134–149 (KASERSESSSKEHRND) the composition is skewed to basic and acidic residues. Over residues 150 to 170 (LANSHLSMRTESNDSRTTVHQ) the composition is skewed to polar residues. Residues 230–239 (VEFDSDEEEP) are compositionally biased toward acidic residues.

As to quaternary structure, component of the minor spliceosome, which splices U12-type introns.

The protein localises to the nucleus. It is found in the nucleoplasm. It localises to the nucleus speckle. Its function is as follows. As a component of the minor spliceosome, involved in the splicing of U12-type introns in pre-mRNAs. In Danio rerio (Zebrafish), this protein is Sodium channel modifier 1 (scnm1).